A 143-amino-acid chain; its full sequence is uncharacterized protein (143 aa).

Residues 13-143 (SLQFPHHRPG…QDAAHQCRIQ (131 aa)) are disordered. The segment covering 17–31 (PHHRPGLRRHRKNTT) has biased composition (basic residues). 3 stretches are compositionally biased toward basic and acidic residues: residues 35–48 (AAVDRPRRTRRGDA), 84–96 (DGREASRTAAEEK), and 112–133 (EKQHVGQDPDANGNHDDDDHAG). Residues 134–143 (QDAAHQCRIQ) show a composition bias toward low complexity.

This is an uncharacterized protein from Homo sapiens (Human).